We begin with the raw amino-acid sequence, 114 residues long: Large ribosomal subunit protein bL21c (114 aa).

Belongs to the bacterial ribosomal protein bL21 family. In terms of assembly, part of the 50S ribosomal subunit.

It localises to the plastid. The protein resides in the chloroplast. Its function is as follows. This protein binds to 23S rRNA. The polypeptide is Large ribosomal subunit protein bL21c (Staurastrum punctulatum (Green alga)).